The chain runs to 323 residues: Acetyl-coenzyme A carboxylase carboxyl transferase subunit alpha (323 aa).

Positions 39–293 (RLSKKSQQLT…RRALADSLRQ (255 aa)) constitute a CoA carboxyltransferase C-terminal domain.

The protein belongs to the AccA family. As to quaternary structure, acetyl-CoA carboxylase is a heterohexamer composed of biotin carboxyl carrier protein (AccB), biotin carboxylase (AccC) and two subunits each of ACCase subunit alpha (AccA) and ACCase subunit beta (AccD).

It localises to the cytoplasm. The enzyme catalyses N(6)-carboxybiotinyl-L-lysyl-[protein] + acetyl-CoA = N(6)-biotinyl-L-lysyl-[protein] + malonyl-CoA. It participates in lipid metabolism; malonyl-CoA biosynthesis; malonyl-CoA from acetyl-CoA: step 1/1. Component of the acetyl coenzyme A carboxylase (ACC) complex. First, biotin carboxylase catalyzes the carboxylation of biotin on its carrier protein (BCCP) and then the CO(2) group is transferred by the carboxyltransferase to acetyl-CoA to form malonyl-CoA. This chain is Acetyl-coenzyme A carboxylase carboxyl transferase subunit alpha, found in Burkholderia lata (strain ATCC 17760 / DSM 23089 / LMG 22485 / NCIMB 9086 / R18194 / 383).